The sequence spans 397 residues: Arginine biosynthesis bifunctional protein ArgJ (397 aa).

Thr-147, Lys-173, Thr-184, Glu-270, Asn-392, and Thr-397 together coordinate substrate. The Nucleophile role is filled by Thr-184.

This sequence belongs to the ArgJ family. In terms of assembly, heterotetramer of two alpha and two beta chains.

The protein resides in the cytoplasm. It carries out the reaction N(2)-acetyl-L-ornithine + L-glutamate = N-acetyl-L-glutamate + L-ornithine. The catalysed reaction is L-glutamate + acetyl-CoA = N-acetyl-L-glutamate + CoA + H(+). The protein operates within amino-acid biosynthesis; L-arginine biosynthesis; L-ornithine and N-acetyl-L-glutamate from L-glutamate and N(2)-acetyl-L-ornithine (cyclic): step 1/1. Its pathway is amino-acid biosynthesis; L-arginine biosynthesis; N(2)-acetyl-L-ornithine from L-glutamate: step 1/4. Catalyzes two activities which are involved in the cyclic version of arginine biosynthesis: the synthesis of N-acetylglutamate from glutamate and acetyl-CoA as the acetyl donor, and of ornithine by transacetylation between N(2)-acetylornithine and glutamate. The sequence is that of Arginine biosynthesis bifunctional protein ArgJ from Staphylococcus epidermidis (strain ATCC 35984 / DSM 28319 / BCRC 17069 / CCUG 31568 / BM 3577 / RP62A).